The chain runs to 326 residues: Isopenicillin N synthase (326 aa).

Isopenicillin N contacts are provided by arginine 84, tyrosine 88, and tyrosine 186. Residues arginine 84, tyrosine 88, tyrosine 186, histidine 209, and aspartate 211 each contribute to the N-[(5S)-5-amino-5-carboxypentanoyl]-L-cysteinyl-D-valine site. Positions 183 to 283 (LIRYPFLENY…RLSIPFFANL (101 aa)) constitute a Fe2OG dioxygenase domain. Fe(2+) contacts are provided by histidine 209, aspartate 211, and histidine 265. A 2-oxoglutarate-binding site is contributed by arginine 274. Serine 276 contacts isopenicillin N. Position 276 (serine 276) interacts with N-[(5S)-5-amino-5-carboxypentanoyl]-L-cysteinyl-D-valine.

Belongs to the iron/ascorbate-dependent oxidoreductase family. It depends on Fe cation as a cofactor. Requires L-ascorbate as cofactor.

It carries out the reaction N-[(5S)-5-amino-5-carboxypentanoyl]-L-cysteinyl-D-valine + O2 = isopenicillin N + 2 H2O. The protein operates within antibiotic biosynthesis; penicillin G biosynthesis; penicillin G from L-alpha-aminoadipate and L-cysteine and L-valine: step 2/3. Its function is as follows. Removes, in the presence of oxygen, 4 hydrogen atoms from delta-L-(alpha-aminoadipyl)-L-cysteinyl-D-valine (ACV) to form the azetidinone and thiazolidine rings of isopenicillin. This chain is Isopenicillin N synthase (pcbC), found in Flavobacterium sp. (strain SC 12,154).